The primary structure comprises 346 residues: Probable RNA methyltransferase PA1839 (346 aa).

Glutamate 91 functions as the Proton acceptor in the catalytic mechanism. Positions 94–320 (LLPRGGLCVS…TKVRNSAGQD (227 aa)) constitute a Radical SAM core domain. Cysteine 101 and cysteine 325 form a disulfide bridge. 3 residues coordinate [4Fe-4S] cluster: cysteine 108, cysteine 112, and cysteine 115. S-adenosyl-L-methionine is bound by residues 153 to 154 (GE), serine 183, 206 to 208 (SLH), and asparagine 282. Residue cysteine 325 is the S-methylcysteine intermediate of the active site.

The protein belongs to the radical SAM superfamily. RlmN family. Requires [4Fe-4S] cluster as cofactor.

Its subcellular location is the cytoplasm. This chain is Probable RNA methyltransferase PA1839, found in Pseudomonas aeruginosa (strain ATCC 15692 / DSM 22644 / CIP 104116 / JCM 14847 / LMG 12228 / 1C / PRS 101 / PAO1).